The primary structure comprises 157 residues: SsrA-binding protein (157 aa).

This sequence belongs to the SmpB family.

Its subcellular location is the cytoplasm. Functionally, required for rescue of stalled ribosomes mediated by trans-translation. Binds to transfer-messenger RNA (tmRNA), required for stable association of tmRNA with ribosomes. tmRNA and SmpB together mimic tRNA shape, replacing the anticodon stem-loop with SmpB. tmRNA is encoded by the ssrA gene; the 2 termini fold to resemble tRNA(Ala) and it encodes a 'tag peptide', a short internal open reading frame. During trans-translation Ala-aminoacylated tmRNA acts like a tRNA, entering the A-site of stalled ribosomes, displacing the stalled mRNA. The ribosome then switches to translate the ORF on the tmRNA; the nascent peptide is terminated with the 'tag peptide' encoded by the tmRNA and targeted for degradation. The ribosome is freed to recommence translation, which seems to be the essential function of trans-translation. The polypeptide is SsrA-binding protein (Chlorobium phaeovibrioides (strain DSM 265 / 1930) (Prosthecochloris vibrioformis (strain DSM 265))).